Consider the following 325-residue polypeptide: MQITVREALRDAMQEEMIRDDKVFVMGEEVAEYQGAYKVTQGLLEQFGPKRVIDTPITEYGFAGLAVGAAFAGLRPIVEFMTFNFAMQAMDHIVNSAAKTHYMSGGQVRCPIVFRGPNGAASRVAAQHSQNYAACYSYIPGLKVVAPYSAEDHKGLMITAIRDDNPVIFLENEILYGHSFDISENVEPIPFGKAKVLKEGDSVTIVTFSIQVKLALDAANILQSDNINCEVIDLRTIKPLDIDTIIESVKKTGRLVVIEEGWFFAGIGATIAAIVMKEAFDYLDAPVEIVSGKDVPLPYAVNLEKLALPSEYDVINAVKKVCYIK.

Position 59 (Glu-59) interacts with thiamine diphosphate.

Heterodimer of an alpha and a beta chain. Thiamine diphosphate serves as cofactor.

The catalysed reaction is N(6)-[(R)-lipoyl]-L-lysyl-[protein] + pyruvate + H(+) = N(6)-[(R)-S(8)-acetyldihydrolipoyl]-L-lysyl-[protein] + CO2. Its function is as follows. The pyruvate dehydrogenase complex catalyzes the overall conversion of pyruvate to acetyl-CoA and CO(2). It contains multiple copies of three enzymatic components: pyruvate dehydrogenase (E1), dihydrolipoamide acetyltransferase (E2) and lipoamide dehydrogenase (E3). In Rickettsia bellii (strain RML369-C), this protein is Pyruvate dehydrogenase E1 component subunit beta (pdhB).